We begin with the raw amino-acid sequence, 210 residues long: Probable nicotinate-nucleotide adenylyltransferase (210 aa).

The protein belongs to the NadD family.

It carries out the reaction nicotinate beta-D-ribonucleotide + ATP + H(+) = deamido-NAD(+) + diphosphate. Its pathway is cofactor biosynthesis; NAD(+) biosynthesis; deamido-NAD(+) from nicotinate D-ribonucleotide: step 1/1. Functionally, catalyzes the reversible adenylation of nicotinate mononucleotide (NaMN) to nicotinic acid adenine dinucleotide (NaAD). In Methylococcus capsulatus (strain ATCC 33009 / NCIMB 11132 / Bath), this protein is Probable nicotinate-nucleotide adenylyltransferase.